Consider the following 156-residue polypeptide: Small ribosomal subunit protein uS7 (156 aa).

Belongs to the universal ribosomal protein uS7 family. In terms of assembly, part of the 30S ribosomal subunit. Contacts proteins S9 and S11.

Functionally, one of the primary rRNA binding proteins, it binds directly to 16S rRNA where it nucleates assembly of the head domain of the 30S subunit. Is located at the subunit interface close to the decoding center, probably blocks exit of the E-site tRNA. This Desulfatibacillum aliphaticivorans protein is Small ribosomal subunit protein uS7.